A 301-amino-acid polypeptide reads, in one-letter code: Mitochondrial ornithine transporter 1 (301 aa).

6 consecutive transmembrane segments (helical) span residues 5-25 (PAIQ…ACVL), 68-88 (SPAL…YGFC), 110-130 (AAAG…TELV), 168-188 (GFYH…FFFF), 207-227 (LGPV…WLAV), and 237-257 (IQVL…LSIV). 3 Solcar repeats span residues 7 to 91 (IQAA…CQQV), 104 to 197 (LSDL…SRSF), and 207 to 293 (LGPV…SRKL).

The protein belongs to the mitochondrial carrier (TC 2.A.29) family. In terms of tissue distribution, widely expressed, with highest levels in the liver, testis and kidney. In the brain, expressed at high levels in the hypothalamus.

The protein resides in the mitochondrion inner membrane. Its subcellular location is the mitochondrion membrane. The catalysed reaction is L-citrulline(in) + L-ornithine(out) + H(+)(in) = L-citrulline(out) + L-ornithine(in) + H(+)(out). It catalyses the reaction L-ornithine(in) + L-arginine(out) = L-ornithine(out) + L-arginine(in). It carries out the reaction L-ornithine(out) + L-lysine(in) = L-ornithine(in) + L-lysine(out). The enzyme catalyses L-lysine(out) + H(+)(in) = L-lysine(in) + H(+)(out). The catalysed reaction is L-ornithine(out) + H(+)(in) = L-ornithine(in) + H(+)(out). With respect to regulation, inhibited by pyridoxal 5'-phosphate as well as by mercurials (mersalyl, p-chloromercuribenzene sulfonate, and mercuric chloride), N-ethylmaleimide and spermine. Mitochondrial ornithine-citrulline antiporter. Catalyzes the exchange between cytosolic ornithine and mitochondrial citrulline plus an H(+), the proton compensates the positive charge of ornithine thus leading to an electroneutral transport. Plays a crucial role in the urea cycle, by connecting the cytosolic and the intramitochondrial reactions of the urea cycle. Lysine and arginine are also transported by the antiport mechanism. In addition, catalyzes an electroneutral exchange of ornithine or lysine for H(+), a reaction driven by the pH gradient across the inner membrane. In Mus musculus (Mouse), this protein is Mitochondrial ornithine transporter 1.